The sequence spans 1264 residues: BRCA2-interacting transcriptional repressor EMSY (1264 aa).

Residues 1-442 (MPVVWPTLLD…LPKPVTATLP (442 aa)) are interaction with BRCA2. The region spanning 16–114 (CKRILRKLEL…EWSIEGRRLV (99 aa)) is the ENT domain. Positions 118-122 (PRLVP) are interaction with ZMYND11. Residues 145 to 179 (PVPAETASKDGVSCSDEDEKPRKRRRTNSSSSSPV) form a disordered region. T171 carries the phosphothreonine modification. Phosphoserine occurs at positions 173 and 177. 2 O-linked (GlcNAc) serine glycosylation sites follow: S192 and S200. S202 is subject to Phosphoserine. Residue T235 is glycosylated (O-linked (GlcNAc) threonine). Residues 364 to 406 (FPKQHQQSPKQQLQQVQQQTQQPVAQPSSVSQQQQPQQSALPP) show a composition bias toward low complexity. The disordered stretch occupies residues 364–407 (FPKQHQQSPKQQLQQVQQQTQQPVAQPSSVSQQQQPQQSALPPG). O-linked (GlcNAc) threonine glycosylation is found at T465 and T470. A glycan (O-linked (GlcNAc) serine) is linked at S521. Residues 660 to 671 (SRVADASNSSAQ) are compositionally biased toward polar residues. The tract at residues 660–700 (SRVADASNSSAQEGKEEPQGYTDSSSSSTESSQSSQDSQPV) is disordered. A compositionally biased stretch (low complexity) spans 681 to 698 (TDSSSSSTESSQSSQDSQ). Residues S782 and S785 each carry the phosphoserine modification. O-linked (GlcNAc) threonine glycosylation occurs at T1069. At S1085 the chain carries Phosphoserine. A disordered region spans residues 1232-1264 (QLDDDETAMEQDIDSSTEDGTEPSPSQSAVERS). The segment covering 1233–1252 (LDDDETAMEQDIDSSTEDGT) has biased composition (acidic residues). Positions 1254-1264 (PSPSQSAVERS) are enriched in polar residues.

As to quaternary structure, homodimer. Interacts with the transactivation domain of BRCA2. Interacts with CBX1 (via chromoshadow domain). Interacts with ZMYND11. Does not interact with CBX3 or CBX5. Component of a nuclear receptor-mediated transcription complex composed of at least ZNF335, CCAR2 and EMSY; the complex stimulates the transcription of nuclear receptor target genes such as SOX9 and HOXA1. Within the complex interacts with CCAR2 and ZNF335. Components of this complex may associate with components of a histone methylation complex to form a complex at least composed of ZNF335, HCFC1, CCAR2, EMSY, MKI67, RBBP5, ASH2L and WDR5. Within this complex, interacts with ASH2L and RBBP5.

Its subcellular location is the nucleus. Functionally, regulator which is able to repress transcription, possibly via its interaction with a multiprotein chromatin remodeling complex that modifies the chromatin. Its interaction with BRCA2 suggests that it may play a central role in the DNA repair function of BRCA2. Mediates ligand-dependent transcriptional activation by nuclear hormone receptors. In Mus musculus (Mouse), this protein is BRCA2-interacting transcriptional repressor EMSY.